The sequence spans 382 residues: Proton extrusion protein PxcA (382 aa).

Helical transmembrane passes span 162–182 (ILLL…TYIV), 257–277 (AIKN…VCLV), 305–325 (IILF…TVLL), and 340–360 (FILL…KYWI).

It belongs to the CemA family.

It is found in the cell inner membrane. Functionally, required for H(+) efflux immediately after light irradiation to form a rapid H(+) concentration gradient across the thylakoid membranes. Together with PxcL, contributes to transient H(+) uptake following dark to light transition. The polypeptide is Proton extrusion protein PxcA (Parasynechococcus marenigrum (strain WH8102)).